Here is a 311-residue protein sequence, read N- to C-terminus: Metal-staphylopine import system permease protein CntB (311 aa).

Helical transmembrane passes span 9-29, 105-125, 139-159, 173-193, 237-257, and 274-294; these read IALM…LTYI, LTII…VVSA, VAFF…IIYV, GPES…GIYF, IFCM…YIFA, and FPVI…FNTL. Residues 99-295 enclose the ABC transmembrane type-1 domain; the sequence is FMNTLKLTII…VLFIVFNTLA (197 aa).

This sequence belongs to the binding-protein-dependent transport system permease family. In terms of assembly, the complex is composed of two ATP-binding proteins (CntD and CntF), two transmembrane proteins (CntB and CntC) and a solute-binding protein (CntA).

Its subcellular location is the cell membrane. Functionally, part of the ABC transporter complex CntABCDF (Opp1) involved in the uptake of metal in complex with the metallophore staphylopine (StP). May be involved in the import of a large array of divalent metals ions such as nickel, cobalt, zinc, copper and iron. Probably responsible for the translocation of the substrate across the membrane. This is Metal-staphylopine import system permease protein CntB from Staphylococcus aureus (strain Mu50 / ATCC 700699).